A 432-amino-acid polypeptide reads, in one-letter code: Adenosylhomocysteinase (432 aa).

Positions 56, 131, and 156 each coordinate substrate. 157 to 159 (TTT) contacts NAD(+). Residues lysine 186 and aspartate 190 each contribute to the substrate site. Residues 222–227 (GDVGKG), glutamate 243, asparagine 248, 299–301 (IGH), asparagine 346, histidine 353, lysine 426, 426–430 (KPDHY), and tyrosine 430 contribute to the NAD(+) site.

Belongs to the adenosylhomocysteinase family. As to quaternary structure, interacts with AhcyL1; the interaction may negatively regulate Ahcy catalytic activity. NAD(+) serves as cofactor.

It carries out the reaction S-adenosyl-L-homocysteine + H2O = L-homocysteine + adenosine. The protein operates within amino-acid biosynthesis; L-homocysteine biosynthesis; L-homocysteine from S-adenosyl-L-homocysteine: step 1/1. Adenosylhomocysteine is a competitive inhibitor of S-adenosyl-L-methionine-dependent methyl transferase reactions; therefore adenosylhomocysteinase may play a key role in the control of methylations via regulation of the intracellular concentration of adenosylhomocysteine. The sequence is that of Adenosylhomocysteinase from Drosophila melanogaster (Fruit fly).